Here is a 102-residue protein sequence, read N- to C-terminus: Small ribosomal subunit protein uS10 (102 aa).

This sequence belongs to the universal ribosomal protein uS10 family. Part of the 30S ribosomal subunit.

Functionally, involved in the binding of tRNA to the ribosomes. This chain is Small ribosomal subunit protein uS10, found in Desulforamulus reducens (strain ATCC BAA-1160 / DSM 100696 / MI-1) (Desulfotomaculum reducens).